Consider the following 138-residue polypeptide: Large ribosomal subunit protein uL16 (138 aa).

The span at 1–15 (MLSPRKVKYRKKQRG) shows a compositional bias: basic residues. Positions 1 to 21 (MLSPRKVKYRKKQRGRLSGEA) are disordered.

This sequence belongs to the universal ribosomal protein uL16 family. In terms of assembly, part of the 50S ribosomal subunit.

Functionally, binds 23S rRNA and is also seen to make contacts with the A and possibly P site tRNAs. The protein is Large ribosomal subunit protein uL16 of Borrelia recurrentis (strain A1).